A 316-amino-acid polypeptide reads, in one-letter code: GTP cyclohydrolase FolE2 1 (316 aa).

Belongs to the GTP cyclohydrolase IV family.

It catalyses the reaction GTP + H2O = 7,8-dihydroneopterin 3'-triphosphate + formate + H(+). It functions in the pathway cofactor biosynthesis; 7,8-dihydroneopterin triphosphate biosynthesis; 7,8-dihydroneopterin triphosphate from GTP: step 1/1. Functionally, converts GTP to 7,8-dihydroneopterin triphosphate. This Burkholderia lata (strain ATCC 17760 / DSM 23089 / LMG 22485 / NCIMB 9086 / R18194 / 383) protein is GTP cyclohydrolase FolE2 1.